Reading from the N-terminus, the 103-residue chain is Small ribosomal subunit protein uS10 (103 aa).

The protein belongs to the universal ribosomal protein uS10 family. As to quaternary structure, part of the 30S ribosomal subunit.

Its function is as follows. Involved in the binding of tRNA to the ribosomes. The chain is Small ribosomal subunit protein uS10 from Cutibacterium acnes (strain DSM 16379 / KPA171202) (Propionibacterium acnes).